The following is a 491-amino-acid chain: Chromosomal replication initiator protein DnaA (491 aa).

The interval 1–68 (MTSIWGQIQH…RTAACGVIGD (68 aa)) is domain I, interacts with DnaA modulators. A domain II region spans residues 68–146 (DTVEVVVTAG…PLDWAPVPQS (79 aa)). The tract at residues 147–364 (RTNWRFSFDD…SCLHNLILKA (218 aa)) is domain III, AAA+ region. 4 residues coordinate ATP: Gly-190, Gly-192, Lys-193, and Thr-194. The tract at residues 365–491 (KLLNRQISLE…RNGRITHARH (127 aa)) is domain IV, binds dsDNA.

It belongs to the DnaA family. As to quaternary structure, oligomerizes as a right-handed, spiral filament on DNA at oriC.

The protein localises to the cytoplasm. In terms of biological role, plays an essential role in the initiation and regulation of chromosomal replication. ATP-DnaA binds to the origin of replication (oriC) to initiate formation of the DNA replication initiation complex once per cell cycle. Binds the DnaA box (a 9 base pair repeat at the origin) and separates the double-stranded (ds)DNA. Forms a right-handed helical filament on oriC DNA; dsDNA binds to the exterior of the filament while single-stranded (ss)DNA is stabiized in the filament's interior. The ATP-DnaA-oriC complex binds and stabilizes one strand of the AT-rich DNA unwinding element (DUE), permitting loading of DNA polymerase. After initiation quickly degrades to an ADP-DnaA complex that is not apt for DNA replication. Binds acidic phospholipids. The protein is Chromosomal replication initiator protein DnaA of Nitratidesulfovibrio vulgaris (strain ATCC 29579 / DSM 644 / CCUG 34227 / NCIMB 8303 / VKM B-1760 / Hildenborough) (Desulfovibrio vulgaris).